A 467-amino-acid chain; its full sequence is MSRPLERQHPVHFIGVGGIGMSALAKILVDRGHPVSGSDPRVTPTSHQLMQLGVTVVHEQTEATIETLLSNGRRPIVVVSTAIPTSNPELRRARDAGLEIWHRSDLLAALIDQQASIAVAGSHGKTTTSTLTTTLLMEAGEDPTAIIGGIVPCLGSNGHAGHGRLLVAEADESDGSLVKFRPQLGLITNLELDHTDHYDGLDDLINTMRLFADGCDQVLANRDCPILKEHIQPDAWWSVTSANGVDFAALPLQLDGDRCLARFYENGAPVGDFMLPLPGLHNLSNAAGALAACRMEGIPFERLVNGLTALKPPGRRFDLRGTWEGRYIVDDYAHHPSEVKATLAMAQLMVSSGRSPFPSPPQRLLAVFQPHRFSRTQEFLESFASALQNCDSLLLAPVYSAGEEPLKGVCSQTLADRIQELKPDLEIAVADNLDHLTQLVRTRSQREDLVLAMGAGDVNGLWPRLSA.

121–127 contributes to the ATP binding site; that stretch reads GSHGKTT.

Belongs to the MurCDEF family.

It localises to the cytoplasm. It carries out the reaction UDP-N-acetyl-alpha-D-muramate + L-alanine + ATP = UDP-N-acetyl-alpha-D-muramoyl-L-alanine + ADP + phosphate + H(+). Its pathway is cell wall biogenesis; peptidoglycan biosynthesis. Its function is as follows. Cell wall formation. This Parasynechococcus marenigrum (strain WH8102) protein is UDP-N-acetylmuramate--L-alanine ligase.